We begin with the raw amino-acid sequence, 505 residues long: Megakaryocyte-associated tyrosine-protein kinase (505 aa).

The region spanning 46–108 (APGTQCMTKC…AAAALRHGEA (63 aa)) is the SH3 domain. The region spanning 120-209 (WFHGKISGQE…AICTKLVKPR (90 aa)) is the SH2 domain. Positions 233-481 (LTLGAQIGEG…IVEKLGRELR (249 aa)) constitute a Protein kinase domain. Residues 239 to 247 (IGEGEFGAV) and Lys260 contribute to the ATP site. The Proton acceptor role is filled by Asp350. The tract at residues 483 to 505 (VGVSAPAGGQEAEGSAPTRSQDP) is disordered.

It belongs to the protein kinase superfamily. Tyr protein kinase family. CSK subfamily. In terms of assembly, interacts with KIT. As to expression, most abundant in brain, and to a lesser extent in the spleen, the thymus and the liver. Also found in the T-cell lineage.

The protein resides in the cytoplasm. It is found in the membrane. The enzyme catalyses L-tyrosyl-[protein] + ATP = O-phospho-L-tyrosyl-[protein] + ADP + H(+). Functionally, could play a significant role in the signal transduction of hematopoietic cells. May regulate tyrosine kinase activity of SRC-family members in brain by specifically phosphorylating their C-terminal regulatory tyrosine residue which acts as a negative regulatory site. It may play an inhibitory role in the control of T-cell proliferation. The polypeptide is Megakaryocyte-associated tyrosine-protein kinase (Matk) (Mus musculus (Mouse)).